Reading from the N-terminus, the 606-residue chain is MFCDQDMYEIPADCQVLVDKTVIEFDGTTVLCRVCGDKASGFHYGVHSCEGCKGFFRRSIQQKIQYRPCTKNQQCSILRINRNRCQYCRLKKCIAVGMSRDAVRFGRVPKREKAKILAAMQSVNAKSQERAVLAELEDDTRVTAAIIRAHMDTCDFTRDKVAPMLQQARTHPSYTQCPPYLACPLNPRPVPLHGQQELVQDFSEALLPAIRGVVEFAKRLPGFQQLPQEDQVTLLKAGVFEVLLVRLAGMFDARTNAMLCLNGQLVRREALHTSVNARFLMDSMFDFAERVNSLALNDAELALFCAVVVLAPDRPGLRNAELVERVHRRLVNCLQAVVSKHHPENPNLQRDLLSKIPDLRTLNTLHSEKLLKYKMTEHTAAGAPWDDSRSSWSMEQESSVGSPSSSYTTDEAMRSPVSCSESICSGESASSGESLCGSEVSGYTELRPPFPLARRRHDHSEGASSGDEATESPLKCPFSKRKSDSPDDSGIESGTDRSDKLSSPSVCSSPRSSIDEKERGGPARTICRCCARLQRRPSSTRICSWRKPTTSPIKSSVRNVGKRSLTPHSPPPPRSWSRRCLSLHSTRALWLRHTPPWPPVWRRPLA.

Residues Thr29–Phe105 constitute a DNA-binding region (nuclear receptor). 2 consecutive NR C4-type zinc fingers follow at residues Cys32–Cys52 and Cys69–Cys93. Positions Asp138–Trp392 constitute an NR LBD domain. 3 disordered regions span residues Gly382–Met413, Arg454–Arg519, and Arg546–Trp576. 2 stretches are compositionally biased toward low complexity: residues Ser390–Ser406 and Leu501–Ser512. The segment covering Arg546 to Arg558 has biased composition (polar residues).

It belongs to the nuclear hormone receptor family. NR1 subfamily. In terms of tissue distribution, expressed in the epidermis, eyestalk and the nerve cord of the pre-molt shrimp.

Its subcellular location is the nucleus. The polypeptide is Nuclear hormone receptor E75 (E75) (Metapenaeus ensis (Greasyback shrimp)).